Consider the following 303-residue polypeptide: Methyltransferase ktnA (303 aa).

The protein belongs to the class I-like SAM-binding methyltransferase superfamily. It depends on S-adenosyl-L-methionine as a cofactor.

Functionally, non-reducing polyketide synthase; part of the gene cluster that mediates the biosynthesis of the bicoumarin kotanin. The non-reducing polyketide synthase ktnS first catalyzes the formation of the pentaketidic 4,7-dihydroxy-5-methylcoumarin from acetyl coenzyme A and 4 malonyl coenzyme A molecules. Further O-methylation by ktnB leads to the formation of 7-demethylsiderin. Then, an oxidative phenol coupling catalyzed by the cytochrome P450 monooxygenase ktnC forms the 8,8'-dimer P-orlandin via dimerization the monomeric precursor, 7-demethylsiderin. P-orlandin is subsequently O-methylated in a stepwise fashion to demethylkotanin and kotanin. The function of ktnA within the pathway has not been determined yet. The polypeptide is Methyltransferase ktnA (Aspergillus niger (strain ATCC MYA-4892 / CBS 513.88 / FGSC A1513)).